The following is a 127-amino-acid chain: Large ribosomal subunit protein uL24 (127 aa).

The protein belongs to the universal ribosomal protein uL24 family. In terms of assembly, component of the large ribosomal subunit. Mature ribosomes consist of a small (40S) and a large (60S) subunit. The 40S subunit contains about 32 different proteins and 1 molecule of RNA (18S). The 60S subunit contains 45 different proteins and 3 molecules of RNA (25S, 5.8S and 5S).

The protein localises to the cytoplasm. In terms of biological role, component of the ribosome, a large ribonucleoprotein complex responsible for the synthesis of proteins in the cell. The small ribosomal subunit (SSU) binds messenger RNAs (mRNAs) and translates the encoded message by selecting cognate aminoacyl-transfer RNA (tRNA) molecules. The large subunit (LSU) contains the ribosomal catalytic site termed the peptidyl transferase center (PTC), which catalyzes the formation of peptide bonds, thereby polymerizing the amino acids delivered by tRNAs into a polypeptide chain. The nascent polypeptides leave the ribosome through a tunnel in the LSU and interact with protein factors that function in enzymatic processing, targeting, and the membrane insertion of nascent chains at the exit of the ribosomal tunnel. The chain is Large ribosomal subunit protein uL24 from Candida albicans (strain SC5314 / ATCC MYA-2876) (Yeast).